Consider the following 273-residue polypeptide: Chlorophyll a-b binding protein 8, chloroplastic (273 aa).

A chloroplast-targeting transit peptide spans 1-32; sequence MATQALISSSSISTSAEAARQIIGSRISQSVT. N2-acetylarginine is present on Arg-33. A chlorophyll b-binding site is contributed by Trp-56. Residues Phe-76, Ser-82, and Glu-100 each contribute to the chlorophyll a site. Arg-105 provides a ligand contact to chlorophyll b. A helical membrane pass occupies residues 106-126; the sequence is FAMLGAAGAIAPEILGKAGLI. Residues Ile-140, Glu-167, and Arg-170 each coordinate chlorophyll b. Residues Lys-224, Glu-225, Asn-228, Arg-230, Gln-242, and His-257 each coordinate chlorophyll a. A helical membrane pass occupies residues 231 to 251; sequence LAMLAILGYFIQALVTGVGPY.

This sequence belongs to the light-harvesting chlorophyll a/b-binding (LHC) protein family. The LHC complex consists of chlorophyll a-b binding proteins. It depends on Binds at least 14 chlorophylls (8 Chl-a and 6 Chl-b) and carotenoids such as lutein and neoxanthin. as a cofactor. Photoregulated by reversible phosphorylation of its threonine residues.

It localises to the plastid. Its subcellular location is the chloroplast thylakoid membrane. Its function is as follows. The light-harvesting complex (LHC) functions as a light receptor, it captures and delivers excitation energy to photosystems with which it is closely associated. This chain is Chlorophyll a-b binding protein 8, chloroplastic (CAB8), found in Solanum lycopersicum (Tomato).